The following is an 873-amino-acid chain: Mitogen-activated protein kinase kinase kinase kinase 3 (873 aa).

The residue at position 1 (methionine 1) is an N-acetylmethionine. The region spanning 16–273 (FELIQRIGSG…AEKLLQHPFV (258 aa)) is the Protein kinase domain. ATP contacts are provided by residues 22–30 (IGSGTYGDV) and lysine 45. Catalysis depends on aspartate 136, which acts as the Proton acceptor. 2 positions are modified to phosphoserine: serine 329 and serine 377. The segment at 389–518 (AHLEDDEGDD…KPISNGLPPT (130 aa)) is disordered. The span at 452 to 466 (HVPPRPPPPRLPPQK) shows a compositional bias: pro residues. Positions 487–499 (VHQQQSEQRGTNL) are enriched in polar residues. One can recognise a CNH domain in the interval 535 to 846 (PLKIHCATSW…IFRLLGSDRV (312 aa)).

It belongs to the protein kinase superfamily. STE Ser/Thr protein kinase family. STE20 subfamily. As to quaternary structure, interacts with SH3GL2. Interaction appears to regulate MAP4K3-mediated JNK activation. The cofactor is Mg(2+).

It carries out the reaction L-seryl-[protein] + ATP = O-phospho-L-seryl-[protein] + ADP + H(+). The catalysed reaction is L-threonyl-[protein] + ATP = O-phospho-L-threonyl-[protein] + ADP + H(+). In terms of biological role, serine/threonine kinase that plays a role in the response to environmental stress. Appears to act upstream of the JUN N-terminal pathway. Activator of the Hippo signaling pathway which plays a pivotal role in organ size control and tumor suppression by restricting proliferation and promoting apoptosis. MAP4Ks act in parallel to and are partially redundant with STK3/MST2 and STK4/MST2 in the phosphorylation and activation of LATS1/2, and establish MAP4Ks as components of the expanded Hippo pathway. In Rattus norvegicus (Rat), this protein is Mitogen-activated protein kinase kinase kinase kinase 3 (Map4k3).